Consider the following 405-residue polypeptide: L-carnitine CoA-transferase (405 aa).

CoA-binding residues include K97 and R104. D169 serves as the catalytic Nucleophile.

It belongs to the CoA-transferase III family. CaiB subfamily. Homodimer.

The protein resides in the cytoplasm. It catalyses the reaction crotonobetainyl-CoA + (R)-carnitine = crotonobetaine + (R)-carnitinyl-CoA. It carries out the reaction 4-(trimethylamino)butanoyl-CoA + (R)-carnitine = (R)-carnitinyl-CoA + 4-(trimethylamino)butanoate. It functions in the pathway amine and polyamine metabolism; carnitine metabolism. Its function is as follows. Catalyzes the reversible transfer of the CoA moiety from gamma-butyrobetainyl-CoA to L-carnitine to generate L-carnitinyl-CoA and gamma-butyrobetaine. Is also able to catalyze the reversible transfer of the CoA moiety from gamma-butyrobetainyl-CoA or L-carnitinyl-CoA to crotonobetaine to generate crotonobetainyl-CoA. The chain is L-carnitine CoA-transferase from Escherichia coli (strain SE11).